A 721-amino-acid polypeptide reads, in one-letter code: Pentatricopeptide repeat-containing protein At3g49710 (721 aa).

PPR repeat units lie at residues 42 to 72, 73 to 103, 104 to 138, 139 to 169, 172 to 202, 204 to 238, 239 to 273, 274 to 307, 308 to 343, 344 to 378, 380 to 410, 411 to 445, 446 to 476, and 482 to 512; these read STYL…TEEP, NVFS…IPQP, DTVS…GFEV, DGFT…SGGF, YSSV…MDEL, DEVS…GFKI, DMFT…GFHQ, NSHV…ILSP, DLVV…GHRP, DDCS…HIPS, RISV…MPEL, NAVS…GIAP, NKIT…MKET, and EAEH…MPYK. Residues 517–592 form a type E motif region; it reads AWAALLGACR…KPGCSWIEVK (76 aa). Residues 593 to 623 form a type E(+) motif region; the sequence is KKKHVFVAEDWSHPMIREVNEYLEEMMKKMK. Positions 624–721 are type DYW motif; the sequence is KVGYVMDKKW…DGKCSCGDYW (98 aa).

This sequence belongs to the PPR family. PCMP-H subfamily.

The polypeptide is Pentatricopeptide repeat-containing protein At3g49710 (PCMP-H79) (Arabidopsis thaliana (Mouse-ear cress)).